Here is a 537-residue protein sequence, read N- to C-terminus: Membrane protein insertase YidC (537 aa).

4 helical membrane-spanning segments follow: residues L5–T25, G353–L373, V418–Y438, and M495–I515.

It belongs to the OXA1/ALB3/YidC family. Type 1 subfamily. As to quaternary structure, interacts with the Sec translocase complex via SecD. Specifically interacts with transmembrane segments of nascent integral membrane proteins during membrane integration.

It is found in the cell inner membrane. Required for the insertion and/or proper folding and/or complex formation of integral membrane proteins into the membrane. Involved in integration of membrane proteins that insert both dependently and independently of the Sec translocase complex, as well as at least some lipoproteins. Aids folding of multispanning membrane proteins. The sequence is that of Membrane protein insertase YidC from Citrifermentans bemidjiense (strain ATCC BAA-1014 / DSM 16622 / JCM 12645 / Bem) (Geobacter bemidjiensis).